The primary structure comprises 275 residues: Hydroxyethylthiazole kinase (275 aa).

Residue Met50 participates in substrate binding. ATP-binding residues include Arg126 and Ser171. Ala200 contributes to the substrate binding site.

Belongs to the Thz kinase family. Mg(2+) serves as cofactor.

The catalysed reaction is 5-(2-hydroxyethyl)-4-methylthiazole + ATP = 4-methyl-5-(2-phosphooxyethyl)-thiazole + ADP + H(+). It participates in cofactor biosynthesis; thiamine diphosphate biosynthesis; 4-methyl-5-(2-phosphoethyl)-thiazole from 5-(2-hydroxyethyl)-4-methylthiazole: step 1/1. Its function is as follows. Catalyzes the phosphorylation of the hydroxyl group of 4-methyl-5-beta-hydroxyethylthiazole (THZ). The protein is Hydroxyethylthiazole kinase of Acinetobacter baumannii (strain SDF).